The sequence spans 480 residues: Krueppel-like factor 10 (480 aa).

A compositionally biased stretch (polar residues) spans 1 to 12 (MLNFGASLQQAS). Disordered regions lie at residues 1–32 (MLNF…PWDK), 64–83 (VTPV…TPDL), and 97–146 (PSDF…APPL). A compositionally biased stretch (basic and acidic residues) spans 14-32 (GKMELISEKSKEGAHPWDK). Ser-183 carries the phosphoserine modification. The disordered stretch occupies residues 202–222 (AAVSPNRPKPEPSTAANGAEK). Position 249 is a phosphoserine (Ser-249). C2H2-type zinc fingers lie at residues 369–393 (HICS…VRTH), 399–423 (FSCS…RRTH), and 429–451 (FACP…ARRH).

The protein belongs to the Sp1 C2H2-type zinc-finger protein family. Ubiquitinated; mediated by SIAH1 and leading to its subsequent proteasomal degradation.

Its subcellular location is the nucleus. Functionally, transcriptional repressor which binds to the consensus sequence 5'-GGTGTG-3'. Regulates the circadian expression of genes involved in lipogenesis, gluconeogenesis, and glycolysis in the liver. Represses the expression of PCK2, a rate-limiting step enzyme of gluconeogenesis. May play a role in the cell cycle regulation. Plays a role in the regulation of the circadian clock; binds to the GC box sequence in the promoter of the core clock component ARTNL/BMAL1 and represses its transcriptional activity. This is Krueppel-like factor 10 (Klf10) from Rattus norvegicus (Rat).